The sequence spans 227 residues: Cytochrome c oxidase subunit 2 (227 aa).

The Mitochondrial intermembrane portion of the chain corresponds to 1–14 (MAYPFQLGLQDATS). A helical membrane pass occupies residues 15 to 45 (PIMEELLHFHDHALMIVFLISSLVLYIISLM). The Mitochondrial matrix segment spans residues 46-59 (LTTKLTHTSTMDAQ). Residues 60–87 (EVETVWTILPAIILILIALPSLRILYMM) form a helical membrane-spanning segment. Over 88-227 (DEINNPSLTV…YFETWSALMV (140 aa)) the chain is Mitochondrial intermembrane. Cu cation contacts are provided by H161, C196, E198, C200, H204, and M207. A Mg(2+)-binding site is contributed by E198. Y218 carries the post-translational modification Phosphotyrosine.

The protein belongs to the cytochrome c oxidase subunit 2 family. Component of the cytochrome c oxidase (complex IV, CIV), a multisubunit enzyme composed of 14 subunits. The complex is composed of a catalytic core of 3 subunits MT-CO1, MT-CO2 and MT-CO3, encoded in the mitochondrial DNA, and 11 supernumerary subunits COX4I, COX5A, COX5B, COX6A, COX6B, COX6C, COX7A, COX7B, COX7C, COX8 and NDUFA4, which are encoded in the nuclear genome. The complex exists as a monomer or a dimer and forms supercomplexes (SCs) in the inner mitochondrial membrane with NADH-ubiquinone oxidoreductase (complex I, CI) and ubiquinol-cytochrome c oxidoreductase (cytochrome b-c1 complex, complex III, CIII), resulting in different assemblies (supercomplex SCI(1)III(2)IV(1) and megacomplex MCI(2)III(2)IV(2)). Found in a complex with TMEM177, COA6, COX18, COX20, SCO1 and SCO2. Interacts with TMEM177 in a COX20-dependent manner. Interacts with COX20. Interacts with COX16. It depends on Cu cation as a cofactor.

Its subcellular location is the mitochondrion inner membrane. The catalysed reaction is 4 Fe(II)-[cytochrome c] + O2 + 8 H(+)(in) = 4 Fe(III)-[cytochrome c] + 2 H2O + 4 H(+)(out). Functionally, component of the cytochrome c oxidase, the last enzyme in the mitochondrial electron transport chain which drives oxidative phosphorylation. The respiratory chain contains 3 multisubunit complexes succinate dehydrogenase (complex II, CII), ubiquinol-cytochrome c oxidoreductase (cytochrome b-c1 complex, complex III, CIII) and cytochrome c oxidase (complex IV, CIV), that cooperate to transfer electrons derived from NADH and succinate to molecular oxygen, creating an electrochemical gradient over the inner membrane that drives transmembrane transport and the ATP synthase. Cytochrome c oxidase is the component of the respiratory chain that catalyzes the reduction of oxygen to water. Electrons originating from reduced cytochrome c in the intermembrane space (IMS) are transferred via the dinuclear copper A center (CU(A)) of subunit 2 and heme A of subunit 1 to the active site in subunit 1, a binuclear center (BNC) formed by heme A3 and copper B (CU(B)). The BNC reduces molecular oxygen to 2 water molecules using 4 electrons from cytochrome c in the IMS and 4 protons from the mitochondrial matrix. The polypeptide is Cytochrome c oxidase subunit 2 (MT-CO2) (Canis aureus (Golden jackal)).